A 205-amino-acid chain; its full sequence is Holliday junction branch migration complex subunit RuvA (205 aa).

A domain I region spans residues M1 to L64. A domain II region spans residues S65–I143. The tract at residues G144–V153 is flexible linker. A domain III region spans residues V153 to R205.

It belongs to the RuvA family. Homotetramer. Forms an RuvA(8)-RuvB(12)-Holliday junction (HJ) complex. HJ DNA is sandwiched between 2 RuvA tetramers; dsDNA enters through RuvA and exits via RuvB. An RuvB hexamer assembles on each DNA strand where it exits the tetramer. Each RuvB hexamer is contacted by two RuvA subunits (via domain III) on 2 adjacent RuvB subunits; this complex drives branch migration. In the full resolvosome a probable DNA-RuvA(4)-RuvB(12)-RuvC(2) complex forms which resolves the HJ.

Its subcellular location is the cytoplasm. Its function is as follows. The RuvA-RuvB-RuvC complex processes Holliday junction (HJ) DNA during genetic recombination and DNA repair, while the RuvA-RuvB complex plays an important role in the rescue of blocked DNA replication forks via replication fork reversal (RFR). RuvA specifically binds to HJ cruciform DNA, conferring on it an open structure. The RuvB hexamer acts as an ATP-dependent pump, pulling dsDNA into and through the RuvAB complex. HJ branch migration allows RuvC to scan DNA until it finds its consensus sequence, where it cleaves and resolves the cruciform DNA. The polypeptide is Holliday junction branch migration complex subunit RuvA (Sinorhizobium fredii (strain NBRC 101917 / NGR234)).